Consider the following 34-residue polypeptide: Ornithine carbamoyltransferase, catabolic (34 aa).

Belongs to the aspartate/ornithine carbamoyltransferase superfamily. OTCase family. In terms of assembly, probably nonameric or dodecameric.

The protein resides in the cytoplasm. The enzyme catalyses carbamoyl phosphate + L-ornithine = L-citrulline + phosphate + H(+). It functions in the pathway amino-acid degradation; L-arginine degradation via ADI pathway; carbamoyl phosphate from L-arginine: step 2/2. This Pseudomonas putida (Arthrobacter siderocapsulatus) protein is Ornithine carbamoyltransferase, catabolic (arcB).